The following is a 527-amino-acid chain: Serine/threonine-protein kinase NLK (527 aa).

Sufficient for interaction with DAPK3 stretches follow at residues 1-125 (MSLC…KAHH) and 124-416 (HHHQ…SKRI). Required for interaction with TAB2 regions lie at residues 1-304 (MSLC…VVTQ) and 434-527 (YHTC…LVWE). Disordered regions lie at residues 22–72 (AAAA…SSAA) and 90–140 (QQPY…DIEP). Over residues 26-54 (GHHHHHHHHLPHLPPPHLHHHHHPQHHLH) the composition is skewed to basic residues. Residues 103–119 (PGPAAAAPAQVQAAAAA) show a composition bias toward low complexity. The segment covering 122–131 (KAHHHQHSHH) has biased composition (basic residues). Residues 138 to 427 (IEPDRPIGYG…AKDALAHPYL (290 aa)) enclose the Protein kinase domain. ATP-binding positions include 144–152 (IGYGAFGVV) and Lys-167. Asp-264 acts as the Proton acceptor in catalysis. Position 298 is a phosphothreonine; by autocatalysis (Thr-298). Positions 298–300 (TQE) match the TQE motif. The tract at residues 428-527 (DEGRLRYHTC…EMPPSPLVWE (100 aa)) is required for homodimerization and kinase activation and localization to the nucleus. A Phosphoserine modification is found at Ser-522.

The protein belongs to the protein kinase superfamily. CMGC Ser/Thr protein kinase family. MAP kinase subfamily. In terms of assembly, homodimer. Homodimerization is required for intermolecular autophosphorylation, kinase activation and nuclear localization. May interact with components of cullin-RING-based SCF (SKP1-CUL1-F-box protein) E3 ubiquitin-protein ligase complexes. Interacts with LEF1, MEF2A, MYBL1 and MYBL2. Interacts with the upstream activating kinases HIPK2 and MAP3K7/TAK1. Interaction with MAP3K7/TAK1 seems to be indirect, and may be mediated by other proteins such as STAT3, TAB1 and TAB2. Interacts with and phosphorylates a number of transcription factors including FOXO1, FOXO3, FOXO4, MYB, NOTCH1 and TCF7L2/TCF4. Interacts with DAPK3/ZIPK, and this interaction may disrupt interaction with transcription factors such as TCF7L2/TCF4. Forms a transcriptional repressor complex with CHD7, PPARG and SETDB1. Interacts with RNF138/NARF. Interacts with ATF5; the interaction stabilizes ATF5 at the protein level in a kinase-independent manner. Mg(2+) is required as a cofactor. Post-translationally, phosphorylated on Thr-298. Intermolecular autophosphorylation on Thr-298 activates the enzyme.

It localises to the nucleus. The protein resides in the cytoplasm. It carries out the reaction L-seryl-[protein] + ATP = O-phospho-L-seryl-[protein] + ADP + H(+). The catalysed reaction is L-threonyl-[protein] + ATP = O-phospho-L-threonyl-[protein] + ADP + H(+). Its activity is regulated as follows. Activated by the non-canonical Wnt signaling pathway, in which WNT5A leads to activation of MAP3K7/TAK1 and HIPK2, which subsequently phosphorylates and activates this protein. Activated by dimerization and subsequent intermolecular autophosphorylation on Thr-298. Other cytokines such as IL6 may also activate this regulatory circuit. Serine/threonine-protein kinase that regulates a number of transcription factors with key roles in cell fate determination. Positive effector of the non-canonical Wnt signaling pathway, acting downstream of WNT5A, MAP3K7/TAK1 and HIPK2. Negative regulator of the canonical Wnt/beta-catenin signaling pathway. Binds to and phosphorylates TCF7L2/TCF4 and LEF1, promoting the dissociation of the TCF7L2/LEF1/beta-catenin complex from DNA, as well as the ubiquitination and subsequent proteolysis of LEF1. Together these effects inhibit the transcriptional activation of canonical Wnt/beta-catenin target genes. Negative regulator of the Notch signaling pathway. Binds to and phosphorylates NOTCH1, thereby preventing the formation of a transcriptionally active ternary complex of NOTCH1, RBPJ/RBPSUH and MAML1. Negative regulator of the MYB family of transcription factors. Phosphorylation of MYB leads to its subsequent proteolysis while phosphorylation of MYBL1 and MYBL2 inhibits their interaction with the coactivator CREBBP. Other transcription factors may also be inhibited by direct phosphorylation of CREBBP itself. Acts downstream of IL6 and MAP3K7/TAK1 to phosphorylate STAT3, which is in turn required for activation of NLK by MAP3K7/TAK1. Upon IL1B stimulus, cooperates with ATF5 to activate the transactivation activity of C/EBP subfamily members. Phosphorylates ATF5 but also stabilizes ATF5 protein levels in a kinase-independent manner. Acts as an inhibitor of the mTORC1 complex in response to osmotic stress by mediating phosphorylation of RPTOR, thereby preventing recruitment of the mTORC1 complex to lysosomes. The sequence is that of Serine/threonine-protein kinase NLK (NLK) from Canis lupus familiaris (Dog).